The chain runs to 932 residues: Probable UDP-N-acetylglucosamine--peptide N-acetylglucosaminyltransferase SPINDLY (932 aa).

A compositionally biased stretch (basic and acidic residues) spans 1–15; it reads MAWTEKDVENGKESD. The interval 1–39 is disordered; sequence MAWTEKDVENGKESDSLGNNGFLKGVQSSSDSKGSPVRI. 11 TPR repeats span residues 48–81, 82–115, 116–149, 157–190, 191–224, 225–258, 266–299, 300–333, 334–367, 369–401, and 402–435; these read GKDA…DSGS, IESL…DPQN, ACAL…DPSY, AIVL…DSHY, APAY…RPMY, AEAY…SPNF, AIAL…NWHY, ADAM…NPHC, AEAC…KPNF, QSLN…NPTY, and AEAY…DPDS. Residues 436-932 are catalytic region; it reads RNAGQNRLLA…NQAGNPGKQS (497 aa). Residues 881-902 form a disordered region; the sequence is VSPIEKTRISASKDGPIKENGF.

It belongs to the glycosyltransferase 41 family. O-GlcNAc transferase subfamily. Expressed in stems, leaves and flowers. Expressed during all stages of corolla maturation.

The protein resides in the nucleus. The enzyme catalyses L-seryl-[protein] + UDP-N-acetyl-alpha-D-glucosamine = 3-O-(N-acetyl-beta-D-glucosaminyl)-L-seryl-[protein] + UDP + H(+). It carries out the reaction L-threonyl-[protein] + UDP-N-acetyl-alpha-D-glucosamine = 3-O-(N-acetyl-beta-D-glucosaminyl)-L-threonyl-[protein] + UDP + H(+). The protein operates within protein modification; protein glycosylation. Functionally, probable O-linked N-acetylglucosamine transferase (OGT) involved in various processes such as gibberellin (GA) signaling pathway. OGTs catalyze the addition of nucleotide-activated sugars directly onto the polypeptide through O-glycosidic linkage with the hydroxyl of serine or threonine. Probably acts by adding O-linked sugars to yet unknown proteins. The protein is Probable UDP-N-acetylglucosamine--peptide N-acetylglucosaminyltransferase SPINDLY (SPY) of Petunia hybrida (Petunia).